We begin with the raw amino-acid sequence, 1180 residues long: DNA-directed RNA polymerase subunit beta' (1180 aa).

Zn(2+) is bound by residues Cys60, Cys62, Cys75, and Cys78. The Mg(2+) site is built by Asp449, Asp451, and Asp453. 4 residues coordinate Zn(2+): Cys792, Cys872, Cys879, and Cys882.

This sequence belongs to the RNA polymerase beta' chain family. As to quaternary structure, the RNAP catalytic core consists of 2 alpha, 1 beta, 1 beta' and 1 omega subunit. When a sigma factor is associated with the core the holoenzyme is formed, which can initiate transcription. Requires Mg(2+) as cofactor. Zn(2+) serves as cofactor.

It carries out the reaction RNA(n) + a ribonucleoside 5'-triphosphate = RNA(n+1) + diphosphate. Its function is as follows. DNA-dependent RNA polymerase catalyzes the transcription of DNA into RNA using the four ribonucleoside triphosphates as substrates. The polypeptide is DNA-directed RNA polymerase subunit beta' (Heliobacterium modesticaldum (strain ATCC 51547 / Ice1)).